Consider the following 363-residue polypeptide: Aminomethyltransferase (363 aa).

It belongs to the GcvT family. In terms of assembly, the glycine cleavage system is composed of four proteins: P, T, L and H.

It carries out the reaction N(6)-[(R)-S(8)-aminomethyldihydrolipoyl]-L-lysyl-[protein] + (6S)-5,6,7,8-tetrahydrofolate = N(6)-[(R)-dihydrolipoyl]-L-lysyl-[protein] + (6R)-5,10-methylene-5,6,7,8-tetrahydrofolate + NH4(+). In terms of biological role, the glycine cleavage system catalyzes the degradation of glycine. The chain is Aminomethyltransferase from Teredinibacter turnerae (strain ATCC 39867 / T7901).